Reading from the N-terminus, the 351-residue chain is Uroporphyrinogen decarboxylase (351 aa).

Substrate contacts are provided by residues 25 to 29 (RQAGR), Asp-74, Tyr-151, Ser-206, and His-325.

It belongs to the uroporphyrinogen decarboxylase family. Homodimer.

It localises to the cytoplasm. The catalysed reaction is uroporphyrinogen III + 4 H(+) = coproporphyrinogen III + 4 CO2. It participates in porphyrin-containing compound metabolism; protoporphyrin-IX biosynthesis; coproporphyrinogen-III from 5-aminolevulinate: step 4/4. Catalyzes the decarboxylation of four acetate groups of uroporphyrinogen-III to yield coproporphyrinogen-III. The chain is Uroporphyrinogen decarboxylase from Chlorobium limicola (strain DSM 245 / NBRC 103803 / 6330).